The following is a 301-amino-acid chain: 33 kDa chaperonin (301 aa).

Intrachain disulfides connect C239/C241 and C272/C275.

It belongs to the HSP33 family. Post-translationally, under oxidizing conditions two disulfide bonds are formed involving the reactive cysteines. Under reducing conditions zinc is bound to the reactive cysteines and the protein is inactive.

It localises to the cytoplasm. In terms of biological role, redox regulated molecular chaperone. Protects both thermally unfolding and oxidatively damaged proteins from irreversible aggregation. Plays an important role in the bacterial defense system toward oxidative stress. This is 33 kDa chaperonin from Nostoc punctiforme (strain ATCC 29133 / PCC 73102).